Consider the following 196-residue polypeptide: Ribosome maturation factor RimP (196 aa).

The disordered stretch occupies residues 164-196 (LAPQKPNKPGPKKPGHEKKKPSNESAAGKPRAE). Residues 173-182 (GPKKPGHEKK) show a composition bias toward basic residues.

The protein belongs to the RimP family.

It is found in the cytoplasm. Functionally, required for maturation of 30S ribosomal subunits. The protein is Ribosome maturation factor RimP of Xanthomonas axonopodis pv. citri (strain 306).